A 308-amino-acid polypeptide reads, in one-letter code: GTPase IMAP family member 5 (308 aa).

Topologically, residues 1–283 (MEHLQKSTYG…VKSCWSSHTA (283 aa)) are cytoplasmic. The AIG1-type G domain maps to 24–227 (SSCLRILLVG…HSNDLFLHAE (204 aa)). GTP contacts are provided by residues 33-41 (GKSGCGKSA), serine 54, 151-153 (RKE), and asparagine 188. The chain crosses the membrane as a helical; Anchor for type IV membrane protein span at residues 284-304 (ACALLIVLGLTLLTTFINLCI). Residues 305–308 (SRCK) lie on the Mitochondrial intermembrane side of the membrane.

Belongs to the TRAFAC class TrmE-Era-EngA-EngB-Septin-like GTPase superfamily. AIG1/Toc34/Toc159-like paraseptin GTPase family. IAN subfamily. Interacts with BAD, BAK1, BAX, BCL2, BCL2L1/Bcl-xL and BCL2L11/BimEL. The interaction with BAX is increased, when cells initiate apoptosis upon IL2 withdrawal. Forms a complex with BCL2L1 or MCL1 and HSPA8/HSC70; the interaction between HSPA8 and BCL2L1 or MCL1 is impaired in the absence of GIMAP5. May interact (via N-terminus) with microtubules. In terms of tissue distribution, expressed in thymus (in thymocytes), spleen (in splenocytes), lymph node and lung. Highly expressed in T lymphocytes. Expressed in B cells and in distinct lineages of hematopoietic bone marrow cells, including natural killer, B, T, myeloid and erythroid lineages. Expressed in liver endothelial cells.

It is found in the lysosome. It localises to the lysosome membrane. Its subcellular location is the endosome. The protein localises to the multivesicular body membrane. The protein resides in the endosome membrane. Functionally, plays a role in T lymphocyte development and the optimal generation of CD4/CD8 double-positive thymocytes. Inhibitor of GSK3A. May act by sequestering GSK3A in cytoplasmic vesicles and impairing its translocation to the nucleus. Consequently, impairs GSK3A-dependent transcriptional program and regulation of the DNA damage response occurring during T cells proliferation. Required for the survival of bone marrow hematopoietic stem cells, as well as of peripheral T cells, natural killer (NK) and NK T-cell development and the maintenance of normal liver function. May promote the survival of mature T lymphocytes upon cytokine withdrawal. May regulate Ca(2+) homeostasis by modulating lysosomal Ca(2+) stores, preventing its accumulation in the absence of T cell activation. May play a role in mitochondrial DNA segregation in hematopoietic tissues. Is a regulator of liver endothelial cell homeostasis. This is GTPase IMAP family member 5 (Gimap5) from Mus musculus (Mouse).